A 296-amino-acid polypeptide reads, in one-letter code: Formylmethanofuran--tetrahydromethanopterin formyltransferase (296 aa).

Belongs to the FTR family. Homotetramer composed of two dimers. Dimerization is sufficient for enzyme activity, but tetramerization is required for high thermostability.

Its subcellular location is the cytoplasm. It catalyses the reaction N-formylmethanofuran + 5,6,7,8-tetrahydromethanopterin + H(+) = N(5)-formyl-5,6,7,8-tetrahydromethanopterin + methanofuran. Its pathway is one-carbon metabolism; methanogenesis from CO(2); 5,10-methenyl-5,6,7,8-tetrahydromethanopterin from CO(2): step 2/3. Its activity is regulated as follows. Requires high salt concentrations for activity and thermostability; 1.5-1.8 M KH(2)PO(4) stimulates activity while stabilizing the enzyme. Functionally, catalyzes the reversible transfer of a formyl group from formylmethanofuran (formyl-MFR) to tetrahydromethanopterin (H(4)MPT) to produce 5-formyl tetrahydromethanopterin (5-formyl-H(4)MPT) and methanofuran (MFR). Acts via a ternary-complex mechanism. Uses N-furfurylformamide much less efficiently, does not use N-methylformamide or formamide. Protein overexpressed in E.coli has very similar properties to enzyme purified from M.kandleri. This chain is Formylmethanofuran--tetrahydromethanopterin formyltransferase, found in Methanopyrus kandleri (strain AV19 / DSM 6324 / JCM 9639 / NBRC 100938).